We begin with the raw amino-acid sequence, 338 residues long: Large ribosomal subunit protein uL10 (338 aa).

The tract at residues 297-338 (PSAQQTQTQQSTAEEKKEEKKEEEKKGPSEEEIGSGLASLFG) is disordered. A compositionally biased stretch (low complexity) spans 298 to 308 (SAQQTQTQQST). Over residues 309 to 325 (AEEKKEEKKEEEKKGPS) the composition is skewed to basic and acidic residues.

It belongs to the universal ribosomal protein uL10 family. Part of the 50S ribosomal subunit. Forms part of the ribosomal stalk which helps the ribosome interact with GTP-bound translation factors. Forms a heptameric L10(L12)2(L12)2(L12)2 complex, where L10 forms an elongated spine to which the L12 dimers bind in a sequential fashion.

In terms of biological role, forms part of the ribosomal stalk, playing a central role in the interaction of the ribosome with GTP-bound translation factors. This Saccharolobus islandicus (strain M.14.25 / Kamchatka #1) (Sulfolobus islandicus) protein is Large ribosomal subunit protein uL10.